The primary structure comprises 471 residues: Pneumolysin (471 aa).

4 consecutive transmembrane segments (beta stranded) span residues 158–171, 178–187, 256–265, and 273–285; these read MEQL…DFEK, IDFNSVHSGE, SDEVEAAFEA, and APQT…LDNT. Positions 427–437 match the Conserved undecapeptide motif; it reads ECTGLAWEWWR. The Cholesterol binding motif lies at 459–460; it reads TL.

This sequence belongs to the cholesterol-dependent cytolysin family. As to quaternary structure, homooligomeric pore complex of 35 to 50 subunits; when inserted in the host membrane. Has a slightly altered apparent molecular weight in a secA2 deletion mutant, but no post-translational modifications have been found.

It localises to the secreted. It is found in the cell wall. The protein resides in the host cell membrane. In terms of biological role, a cholesterol-dependent toxin that causes cytolysis by forming pores in cholesterol containing host membranes. After binding to target membranes, the protein undergoes a major conformation change, leading to its insertion in the host membrane and formation of an oligomeric pore complex. Cholesterol is required for binding to host membranes, membrane insertion and pore formation; cholesterol binding is mediated by a Thr-Leu pair in the C-terminus. Can be reversibly inactivated by oxidation. This is Pneumolysin (ply) from Streptococcus pneumoniae serotype 4 (strain ATCC BAA-334 / TIGR4).